A 462-amino-acid polypeptide reads, in one-letter code: Cysteine--tRNA ligase (462 aa).

Position 30 (Cys-30) interacts with Zn(2+). The short motif at 32-42 (MTVYDYCHIGH) is the 'HIGH' region element. Zn(2+) contacts are provided by Cys-214, His-239, and Glu-243. The 'KMSKS' region motif lies at 271–275 (KMSKS). Position 274 (Lys-274) interacts with ATP.

It belongs to the class-I aminoacyl-tRNA synthetase family. In terms of assembly, monomer. It depends on Zn(2+) as a cofactor.

Its subcellular location is the cytoplasm. The enzyme catalyses tRNA(Cys) + L-cysteine + ATP = L-cysteinyl-tRNA(Cys) + AMP + diphosphate. The chain is Cysteine--tRNA ligase from Herminiimonas arsenicoxydans.